The following is a 332-amino-acid chain: Ferredoxin--NADP reductase 1 (332 aa).

Residues Asp35, Lys43, Phe48, Val88, Phe123, Asp284, and Thr325 each coordinate FAD.

This sequence belongs to the ferredoxin--NADP reductase type 2 family. As to quaternary structure, homodimer. It depends on FAD as a cofactor.

The enzyme catalyses 2 reduced [2Fe-2S]-[ferredoxin] + NADP(+) + H(+) = 2 oxidized [2Fe-2S]-[ferredoxin] + NADPH. The polypeptide is Ferredoxin--NADP reductase 1 (Listeria welshimeri serovar 6b (strain ATCC 35897 / DSM 20650 / CCUG 15529 / CIP 8149 / NCTC 11857 / SLCC 5334 / V8)).